A 39-amino-acid polypeptide reads, in one-letter code: MGFYSGYSGGYSGGGYGSSFVLIVVLFILLIIVGATFLY.

A helical transmembrane segment spans residues 19 to 39 (SFVLIVVLFILLIIVGATFLY).

It belongs to the SscA family.

Its subcellular location is the membrane. The sequence is that of SPbeta prophage-derived membrane protein YosA (yosA) from Bacillus subtilis (strain 168).